The following is a 473-amino-acid chain: Sensor histidine kinase GtrS (473 aa).

The Cytoplasmic segment spans residues 1–8; the sequence is MPRSLLGR. Residues 9-29 traverse the membrane as a helical segment; it reads MLLLTLLAVLVAQGLSSLFWL. At 30–197 the chain is on the periplasmic side; it reads SHLRSSQREG…LEPEGLQPQQ (168 aa). Residues 198 to 218 form a helical membrane-spanning segment; sequence VLSIVFTSLLLLLFTGLLMHW. In terms of domain architecture, HAMP spans 217-269; the sequence is HWQSRPLKRLARAARDLALGSPSAALEERGASELVEVARAFNTMHERIDRYLN. At 219-473 the chain is on the cytoplasmic side; the sequence is QSRPLKRLAR…SLRLPRLGLE (255 aa). The 195-residue stretch at 277–471 folds into the Histidine kinase domain; sequence AISHDLRTPI…RVSLRLPRLG (195 aa). At His280 the chain carries Phosphohistidine; by autocatalysis.

In terms of processing, autophosphorylated.

The protein localises to the cell inner membrane. The catalysed reaction is ATP + protein L-histidine = ADP + protein N-phospho-L-histidine.. Its function is as follows. Member of the two-component regulatory system GtrS/GltR involved in the regulation of glucose metabolism and transport, as well as regulation of the exotoxin A gene expression. GtrS recognizes and binds 2-ketogluconate and 6-phosphogluconate via its sensor domain, which accelerates GtrS autophosphorylation and concomitant transphosphorylation and regulation of the response regulator GltR. In terms of biological role, plays a key role during bacteria-host interactions and is required for optimal colonization and dissemination in a mouse model of infection. Contributes to modulation of the type III secretion system (T3SS) in response to host cells via the regulation of the OprB transport system. The chain is Sensor histidine kinase GtrS from Pseudomonas aeruginosa (strain ATCC 15692 / DSM 22644 / CIP 104116 / JCM 14847 / LMG 12228 / 1C / PRS 101 / PAO1).